The primary structure comprises 333 residues: Glycerol-3-phosphate dehydrogenase [NAD(P)+] (333 aa).

Residues serine 10, tryptophan 11, and lysine 105 each contribute to the NADPH site. The sn-glycerol 3-phosphate site is built by lysine 105, glycine 136, and threonine 138. Position 140 (alanine 140) interacts with NADPH. Residues lysine 191, aspartate 244, serine 254, arginine 255, and asparagine 256 each coordinate sn-glycerol 3-phosphate. Lysine 191 functions as the Proton acceptor in the catalytic mechanism. Position 255 (arginine 255) interacts with NADPH. NADPH is bound by residues valine 279 and glutamate 281.

The protein belongs to the NAD-dependent glycerol-3-phosphate dehydrogenase family.

It is found in the cytoplasm. The catalysed reaction is sn-glycerol 3-phosphate + NAD(+) = dihydroxyacetone phosphate + NADH + H(+). It catalyses the reaction sn-glycerol 3-phosphate + NADP(+) = dihydroxyacetone phosphate + NADPH + H(+). The protein operates within membrane lipid metabolism; glycerophospholipid metabolism. Its function is as follows. Catalyzes the reduction of the glycolytic intermediate dihydroxyacetone phosphate (DHAP) to sn-glycerol 3-phosphate (G3P), the key precursor for phospholipid synthesis. The polypeptide is Glycerol-3-phosphate dehydrogenase [NAD(P)+] (Trichlorobacter lovleyi (strain ATCC BAA-1151 / DSM 17278 / SZ) (Geobacter lovleyi)).